Consider the following 131-residue polypeptide: Small ribosomal subunit protein uS11 (131 aa).

It belongs to the universal ribosomal protein uS11 family. Part of the 30S ribosomal subunit. Interacts with proteins S7 and S18. Binds to IF-3.

Its function is as follows. Located on the platform of the 30S subunit, it bridges several disparate RNA helices of the 16S rRNA. Forms part of the Shine-Dalgarno cleft in the 70S ribosome. In Granulibacter bethesdensis (strain ATCC BAA-1260 / CGDNIH1), this protein is Small ribosomal subunit protein uS11.